The primary structure comprises 238 residues: Gem-associated protein 8 (238 aa).

The disordered stretch occupies residues 66 to 127 (AGHPWDSQGQ…LESDSDDEVE (62 aa)). Polar residues-rich tracts occupy residues 72–82 (SQGQHMAQQES) and 96–108 (LRNSSRTQASTRG). Positions 113–127 (CEEEELESDSDDEVE) are enriched in acidic residues. At serine 122 the chain carries Phosphoserine. Positions 131-164 (SNMEITEELRQYFAQTERHREERRRQQQLDAERL) form a coiled coil.

As to quaternary structure, part of the core SMN complex that contains SMN1, GEMIN2/SIP1, DDX20/GEMIN3, GEMIN4, GEMIN5, GEMIN6, GEMIN7, GEMIN8 and STRAP/UNRIP. Part of the SMN-Sm complex that contains SMN1, GEMIN2/SIP1, DDX20/GEMIN3, GEMIN4, GEMIN5, GEMIN6, GEMIN7, GEMIN8, STRAP/UNRIP and the Sm proteins SNRPB, SNRPD1, SNRPD2, SNRPD3, SNRPE, SNRPF and SNRPG. Interacts with GEMIN6; the interaction is direct. Interacts with GEMIN7; the interaction is direct. Interacts with SMN1; the interaction is direct. Interacts with GEMIN4; the interaction is direct. As to expression, widely expressed in embryonic tissues (at protein level).

It localises to the nucleus. It is found in the gem. The protein resides in the cytoplasm. Its function is as follows. The SMN complex catalyzes the assembly of small nuclear ribonucleoproteins (snRNPs), the building blocks of the spliceosome, and thereby plays an important role in the splicing of cellular pre-mRNAs. Most spliceosomal snRNPs contain a common set of Sm proteins SNRPB, SNRPD1, SNRPD2, SNRPD3, SNRPE, SNRPF and SNRPG that assemble in a heptameric protein ring on the Sm site of the small nuclear RNA to form the core snRNP (Sm core). In the cytosol, the Sm proteins SNRPD1, SNRPD2, SNRPE, SNRPF and SNRPG are trapped in an inactive 6S pICln-Sm complex by the chaperone CLNS1A that controls the assembly of the core snRNP. To assemble core snRNPs, the SMN complex accepts the trapped 5Sm proteins from CLNS1A forming an intermediate. Binding of snRNA inside 5Sm triggers eviction of the SMN complex, thereby allowing binding of SNRPD3 and SNRPB to complete assembly of the core snRNP. This chain is Gem-associated protein 8 (Gemin8), found in Mus musculus (Mouse).